We begin with the raw amino-acid sequence, 312 residues long: Malate dehydrogenase 1 (312 aa).

Residues 11 to 16 (GAGQIG) and aspartate 35 each bind NAD(+). 2 residues coordinate substrate: arginine 86 and arginine 92. NAD(+) contacts are provided by residues asparagine 99 and 122–124 (ITN). Substrate contacts are provided by asparagine 124 and arginine 155. Histidine 179 acts as the Proton acceptor in catalysis.

The protein belongs to the LDH/MDH superfamily. MDH type 3 family.

The catalysed reaction is (S)-malate + NAD(+) = oxaloacetate + NADH + H(+). In terms of biological role, catalyzes the reversible oxidation of malate to oxaloacetate. This is Malate dehydrogenase 1 from Anaeromyxobacter dehalogenans (strain 2CP-C).